The sequence spans 45 residues: Alpha-conotoxin-like Lp1.10 (45 aa).

The propeptide occupies 1-27; that stretch reads VVLGPASDGRNAAANVKAPDLIALTVR. 2 disulfide bridges follow: cysteine 30-cysteine 36 and cysteine 31-cysteine 44. The lacks the Ser-Xaa-Pro motif that is crucial for potent interaction with nAChR stretch occupies residues 32-34; sequence HNA. Cysteine 44 carries the cysteine amide modification.

The protein belongs to the conotoxin A superfamily. Expressed by the venom duct.

It localises to the secreted. Functionally, alpha-conotoxins act on postsynaptic membranes, they bind to the nicotinic acetylcholine receptors (nAChR) and thus inhibit them. Has possibly a distinct nAChR binding mode from other alpha-conotoxins, due to a different three residue motif (lacks the Ser-Xaa-Pro motif). The sequence is that of Alpha-conotoxin-like Lp1.10 from Conus leopardus (Leopard cone).